A 453-amino-acid polypeptide reads, in one-letter code: Probable glucan endo-1,3-beta-glucosidase eglC (453 aa).

The N-terminal stretch at 1 to 18 (MQTRQLLALALAVAATEA) is a signal peptide. Glutamate 128 functions as the Proton donor in the catalytic mechanism. An N-linked (GlcNAc...) asparagine glycan is attached at asparagine 183. Glutamate 239 acts as the Nucleophile in catalysis. Residues asparagine 364, asparagine 368, and asparagine 376 are each glycosylated (N-linked (GlcNAc...) asparagine). A compositionally biased stretch (polar residues) spans 370 to 380 (TYPGSWNSTRP). The interval 370-423 (TYPGSWNSTRPGANGGSSGSSGSSGSSGSSGSSGSSGSGASGHSSSTGSSSFPS) is disordered. Low complexity-rich tracts occupy residues 389-402 (SSGSSGSSGSSGSS) and 410-423 (SGHSSSTGSSSFPS). The GPI-anchor amidated asparagine moiety is linked to residue asparagine 430. A propeptide spans 431-453 (SASGLSGSLFGAVAAVFVALAAL) (removed in mature form).

The protein belongs to the glycosyl hydrolase 17 family. The GPI-anchor is attached to the protein in the endoplasmic reticulum and serves to target the protein to the cell surface. There, the glucosamine-inositol phospholipid moiety is cleaved off and the GPI-modified mannoprotein is covalently attached via its lipidless GPI glycan remnant to the 1,6-beta-glucan of the outer cell wall layer.

The protein localises to the cell membrane. The protein resides in the secreted. It localises to the cell wall. The catalysed reaction is Hydrolysis of (1-&gt;3)-beta-D-glucosidic linkages in (1-&gt;3)-beta-D-glucans.. Functionally, glucanases play a role in cell expansion during growth, in cell-cell fusion during mating, and in spore release during sporulation. This enzyme may be involved in beta-glucan degradation and also function biosynthetically as a transglycosylase. The polypeptide is Probable glucan endo-1,3-beta-glucosidase eglC (eglC) (Aspergillus clavatus (strain ATCC 1007 / CBS 513.65 / DSM 816 / NCTC 3887 / NRRL 1 / QM 1276 / 107)).